The chain runs to 3342 residues: Large tegument protein deneddylase (3342 aa).

Positions 1–302 (MTDSTDSRQA…SRIYGTSDIV (302 aa)) are deubiquitination activity. The Peptidase C76 domain maps to 78–298 (VAVGIRNQFA…ISTVSRIYGT (221 aa)). Catalysis depends on residues C98, D232, and H234. Positions 472 to 554 (RRPLWTPQSS…SPTTSNRGED (83 aa)) are disordered. Residues 480-494 (SSSENISLDGSSSSL) show a composition bias toward low complexity. A compositionally biased stretch (polar residues) spans 514–526 (VTSTESSDVTENV). The tract at residues 630–656 (LYVCMMDIFARLFNYIIENGARTTSDR) is interaction with inner tegument protein. Disordered stretches follow at residues 2584-2603 (DGDADISSNRIDSEDDTYAD), 2654-2987 (PQIG…SRKH), and 3196-3279 (PKHD…SSTS). Composition is skewed to pro residues over residues 2701-2743 (TPAP…PKPK), 2751-2777 (KPSPAPKPSPASKPTPAPKPSPAPKPK), 2785-2799 (KPTPAPKPSPASKPK), 2823-2837 (KPSPAPKPSPAPKPK), and 2845-2897 (KPTP…PKPK). The segment covering 2911–2947 (NSDSKTSPVPNPNTFSASKIPPTSSIAEETKPCQSNL) has biased composition (polar residues). Residues 3264–3279 (HVSGSTDTTTDGSSTS) are compositionally biased toward low complexity.

The protein belongs to the herpesviridae large tegument protein family. As to quaternary structure, interacts with host CUL1 and CUL4A; these interactions inhibit the E3 ligase activity of cullins. Interacts with inner tegument protein. Interacts with capsid vertex specific component CVC2. Interacts with the major capsid protein/MCP.

The protein resides in the virion tegument. It localises to the host cytoplasm. The protein localises to the host nucleus. It catalyses the reaction Thiol-dependent hydrolysis of ester, thioester, amide, peptide and isopeptide bonds formed by the C-terminal Gly of ubiquitin (a 76-residue protein attached to proteins as an intracellular targeting signal).. Its function is as follows. Large tegument protein that plays multiple roles in the viral cycle. During viral entry, remains associated with the capsid while most of the tegument is detached and participates in the capsid transport toward the host nucleus. Plays a role in the routing of the capsid at the nuclear pore complex and subsequent uncoating. Within the host nucleus, acts as a deneddylase and promotes the degradation of nuclear CRLs (cullin-RING ubiquitin ligases) and thereby stabilizes nuclear CRL substrates, while cytoplasmic CRLs remain unaffected. These modifications prevent host cell cycle S-phase progression and create a favorable environment allowing efficient viral genome replication. Participates later in the secondary envelopment of capsids. Indeed, plays a linker role for the association of the outer viral tegument to the capsids together with the inner tegument protein. In Gallus gallus (Chicken), this protein is Large tegument protein deneddylase (MDV049).